We begin with the raw amino-acid sequence, 897 residues long: 3'-5' exonuclease DinG (897 aa).

The Exonuclease domain occupies 8–161 (VVDLETTGNQ…DEDAATTAKL (154 aa)). The 256-residue stretch at 241 to 496 (SKAVDQLGLT…KAIDQLEKQR (256 aa)) folds into the Helicase ATP-binding domain. ATP is bound at residue 276-283 (ASLGSGKS). A DEAH box motif is present at residues 448–451 (DEAH). Residues 703–893 (NIDEYVASIV…QFGKLLRQIQ (191 aa)) form the Helicase C-terminal domain.

It belongs to the helicase family. DinG subfamily. Type 2 sub-subfamily.

Functionally, 3'-5' exonuclease. The polypeptide is 3'-5' exonuclease DinG (Staphylococcus aureus (strain MSSA476)).